Here is a 356-residue protein sequence, read N- to C-terminus: Vacuolar protein sorting-associated protein 26 (356 aa).

The interval 301-356 is disordered; it reads MRRPGTEDDEEEKQTTSIPGTQKFTAPAPVEHPKPESPRSDPKSGSTSPDDNSDSS. Positions 315 to 324 are enriched in polar residues; sequence TTSIPGTQKF. The segment covering 331–342 has biased composition (basic and acidic residues); the sequence is EHPKPESPRSDP.

The protein belongs to the VPS26 family.

In terms of biological role, may play a role in vesicular protein sorting, similar to the yeast retromer proteins. The chain is Vacuolar protein sorting-associated protein 26 (vps-26) from Caenorhabditis elegans.